The sequence spans 440 residues: General transcription factor IIE subunit 1 (440 aa).

Alanine 2 carries the N-acetylalanine modification. An HTH TFE/IIEalpha-type domain is found at 14 to 104; sequence LKRLAKYVIR…NYRTLVNVVK (91 aa). Lysine 67 is subject to N6-acetyllysine. Residues cysteine 129, cysteine 132, cysteine 154, and cysteine 157 each contribute to the Zn(2+) site. The C4-type zinc finger occupies 129–157; the sequence is CPVCCSTFTDLEANQLFDPMTGTFRCTFC. Serine 268 carries the phosphoserine modification. A compositionally biased stretch (low complexity) spans 333-353; sequence SSVTAGSVGAAAPVTAANGSD. The disordered stretch occupies residues 333 to 395; sequence SSVTAGSVGA…EEFEEVADDP (63 aa). 2 stretches are compositionally biased toward acidic residues: residues 354 to 364 and 381 to 393; these read SESETSESDDD and EDEE…EVAD.

The protein belongs to the TFIIE alpha subunit family. Tetramer of two alpha and two beta chains. Interacts with TAF6/TAFII80. Interacts with ATF7IP. Interacts with SND1. Part of TBP-based Pol II pre-initiation complex (PIC), in which Pol II core assembles with general transcription factors and other specific initiation factors including GTF2E1, GTF2E2, GTF2F1, GTF2F2, TCEA1, ERCC2, ERCC3, GTF2H2, GTF2H3, GTF2H4, GTF2H5, GTF2A1, GTF2A2, GTF2B and TBP; this large multi-subunit PIC complex mediates DNA unwinding and targets Pol II core to the transcription start site where the first phosphodiester bond forms.

The protein resides in the nucleus. In terms of biological role, recruits TFIIH to the initiation complex and stimulates the RNA polymerase II C-terminal domain kinase and DNA-dependent ATPase activities of TFIIH. Both TFIIH and TFIIE are required for promoter clearance by RNA polymerase. This Mus musculus (Mouse) protein is General transcription factor IIE subunit 1 (Gtf2e1).